The sequence spans 277 residues: MKTKLDFVKMKENGEPIVMLTAYDYPQAKLAEQAGVDMILVGDSLGMVVLGLDSTVGVTVSDMIHHTKAVKRGAKNTFIVTDMPFMSYHLSKEDTLKNAAAIIQESGADALKLEGGDGVFESIRALTLGGIPVVSHLGLTPQSVGVLGGYKVQGKDEQSAKKLIEDSIKCEQAGAMMLVLECVPAELTAKIKEEVSIPVIGIGAGSKADGQVLVYHDVVGHGVDRTPKFVKQYAKIDGTIESALSGYVRDVKERVFPEEKHSFQINQTVLQGLYGGK.

Residues Asp-43 and Asp-82 each contribute to the Mg(2+) site. 3-methyl-2-oxobutanoate contacts are provided by residues 43–44 (DS), Asp-82, and Lys-112. Mg(2+) is bound at residue Glu-114. Glu-181 serves as the catalytic Proton acceptor.

It belongs to the PanB family. In terms of assembly, homodecamer; pentamer of dimers. The cofactor is Mg(2+).

The protein resides in the cytoplasm. The enzyme catalyses 3-methyl-2-oxobutanoate + (6R)-5,10-methylene-5,6,7,8-tetrahydrofolate + H2O = 2-dehydropantoate + (6S)-5,6,7,8-tetrahydrofolate. It participates in cofactor biosynthesis; (R)-pantothenate biosynthesis; (R)-pantoate from 3-methyl-2-oxobutanoate: step 1/2. In terms of biological role, catalyzes the reversible reaction in which hydroxymethyl group from 5,10-methylenetetrahydrofolate is transferred onto alpha-ketoisovalerate to form ketopantoate. The chain is 3-methyl-2-oxobutanoate hydroxymethyltransferase from Bacillus velezensis (strain DSM 23117 / BGSC 10A6 / LMG 26770 / FZB42) (Bacillus amyloliquefaciens subsp. plantarum).